The sequence spans 470 residues: Calcitonin gene-related peptide type 1 receptor (470 aa).

The signal sequence occupies residues 1–23; the sequence is MTASCWTICLFLLGSVTEFIVLA. Topologically, residues 24-147 are extracellular; sequence SPEVNESQQQ…HTTEGRRTAM (124 aa). N-linked (GlcNAc...) asparagine glycans are attached at residues N28, N74, N126, and N131. 3 cysteine pairs are disulfide-bonded: C56–C82, C73–C113, and C96–C135. Residues 148–172 form a helical membrane-spanning segment; the sequence is NLFYLALIGHGLSLTSLFISLGIFF. The Cytoplasmic portion of the chain corresponds to 173–183; that stretch reads HFKSLSCQRIT. Residues 184–206 form a helical membrane-spanning segment; it reads LHKNLFFSFVLNSIITIIWLTAV. The Extracellular segment spans residues 207–217; sequence ANNQELVQQNP. The chain crosses the membrane as a helical span at residues 218–246; sequence ISCKISQFIHLYIFGCNYFWMLCEGIYLH. At 247–260 the chain is on the cytoplasmic side; the sequence is TLIVVAVFAEKQHL. Residues 261–281 form a helical membrane-spanning segment; sequence MWYYLLGWGFPLIPATIHAVA. At 282-297 the chain is on the extracellular side; that stretch reads RSYYYNDNCWISSNTS. An N-linked (GlcNAc...) asparagine glycan is attached at N295. Residues 298–322 traverse the membrane as a helical segment; the sequence is LLYIIHGPICAAMLVNLFFLLNIVR. The Cytoplasmic portion of the chain corresponds to 323–337; the sequence is VLITKLKVTHQAKSS. A helical transmembrane segment spans residues 338–359; the sequence is LYMKAVRATLILVPLLGIQYVL. Topologically, residues 360–374 are extracellular; the sequence is LPYKPSGRVSAEIYD. Residues 375-395 traverse the membrane as a helical segment; the sequence is YIMHILMHYQGLLVATIFCFF. The Cytoplasmic segment spans residues 396–470; the sequence is NGEVQAVLRR…AIIKPENPFA (75 aa).

Belongs to the G-protein coupled receptor 2 family.

The protein localises to the cell membrane. May function as G protein-coupled receptor for calcitonin-gene-related peptides and adrenomedullin. Specificity may be modulated by accessory proteins. May activate cAMP-dependent pathway. In Danio rerio (Zebrafish), this protein is Calcitonin gene-related peptide type 1 receptor (calcrla).